Reading from the N-terminus, the 947-residue chain is Protein NETWORKED 2D (947 aa).

The 81-residue stretch at 10-90 (YSWWWASHIR…ERYDHISTEL (81 aa)) folds into the NAB domain. Coiled coils occupy residues 176 to 205 (KPEAMGEIDKLQKEILALQTEKEFVKSSYE), 247 to 342 (MTET…HFES), and 375 to 433 (TALI…VLDK). Disordered regions lie at residues 455-555 (NLHE…DKTD) and 580-620 (EKQG…GEPD). Positions 474–514 (PQKDLEGEKRTLDISEEIKEHQKETGEEKKEAPVKSVKFEQ) are enriched in basic and acidic residues. The span at 525–536 (TIPSTNPDTVLE) shows a compositional bias: polar residues. Basic and acidic residues-rich tracts occupy residues 537-555 (STEKVDSDLEKQDASDKTD), 580-589 (EKQGESDKID), and 610-620 (EDQKEKEGEPD). 2 coiled-coil regions span residues 645 to 684 (RNFKDMKKTLDETKTKMKTENATKDDEIKLLREKMSLLQK) and 744 to 773 (GQIQSYDTSIEDLQAEISKLEQRRKQDGSS).

It belongs to the NET family.

Its function is as follows. Plant-specific actin binding protein. May be part of a membrane-cytoskeletal adapter complex. The polypeptide is Protein NETWORKED 2D (Arabidopsis thaliana (Mouse-ear cress)).